The following is a 161-amino-acid chain: SsrA-binding protein (161 aa).

The disordered stretch occupies residues 1-23; that stretch reads MATKKNEQIKGRTDGLVAENRRS.

It belongs to the SmpB family.

The protein localises to the cytoplasm. Functionally, required for rescue of stalled ribosomes mediated by trans-translation. Binds to transfer-messenger RNA (tmRNA), required for stable association of tmRNA with ribosomes. tmRNA and SmpB together mimic tRNA shape, replacing the anticodon stem-loop with SmpB. tmRNA is encoded by the ssrA gene; the 2 termini fold to resemble tRNA(Ala) and it encodes a 'tag peptide', a short internal open reading frame. During trans-translation Ala-aminoacylated tmRNA acts like a tRNA, entering the A-site of stalled ribosomes, displacing the stalled mRNA. The ribosome then switches to translate the ORF on the tmRNA; the nascent peptide is terminated with the 'tag peptide' encoded by the tmRNA and targeted for degradation. The ribosome is freed to recommence translation, which seems to be the essential function of trans-translation. The protein is SsrA-binding protein of Hyphomonas neptunium (strain ATCC 15444).